A 473-amino-acid chain; its full sequence is Photosystem II CP43 reaction center protein (473 aa).

Residues 1–14 (MKTLYSLRRFYPVE) constitute a propeptide that is removed on maturation. Thr15 is modified (N-acetylthreonine). Thr15 carries the phosphothreonine modification. 5 helical membrane passes run 69 to 93 (LFEV…PHLA), 134 to 155 (LLGP…KDRN), 178 to 200 (KALY…RKIT), 255 to 275 (KPFA…LSYS), and 291 to 312 (WFNN…ASQA). Glu367 lines the [CaMn4O5] cluster pocket. The helical transmembrane segment at 447–471 (RARAAAAGFEKGIDRDFEPVLSMTP) threads the bilayer.

The protein belongs to the PsbB/PsbC family. PsbC subfamily. In terms of assembly, PSII is composed of 1 copy each of membrane proteins PsbA, PsbB, PsbC, PsbD, PsbE, PsbF, PsbH, PsbI, PsbJ, PsbK, PsbL, PsbM, PsbT, PsbX, PsbY, PsbZ, Psb30/Ycf12, at least 3 peripheral proteins of the oxygen-evolving complex and a large number of cofactors. It forms dimeric complexes. Requires Binds multiple chlorophylls and provides some of the ligands for the Ca-4Mn-5O cluster of the oxygen-evolving complex. It may also provide a ligand for a Cl- that is required for oxygen evolution. PSII binds additional chlorophylls, carotenoids and specific lipids. as cofactor.

The protein resides in the plastid. Its subcellular location is the chloroplast thylakoid membrane. Its function is as follows. One of the components of the core complex of photosystem II (PSII). It binds chlorophyll and helps catalyze the primary light-induced photochemical processes of PSII. PSII is a light-driven water:plastoquinone oxidoreductase, using light energy to abstract electrons from H(2)O, generating O(2) and a proton gradient subsequently used for ATP formation. The sequence is that of Photosystem II CP43 reaction center protein from Populus trichocarpa (Western balsam poplar).